The following is a 706-amino-acid chain: Elongation factor G (706 aa).

Positions 8–290 (NRYRNIGICA…AVIDYLPAPT (283 aa)) constitute a tr-type G domain. Residues 17 to 24 (AHVDAGKT), 88 to 92 (DTPGH), and 142 to 145 (NKMD) each bind GTP.

The protein belongs to the TRAFAC class translation factor GTPase superfamily. Classic translation factor GTPase family. EF-G/EF-2 subfamily.

It is found in the cytoplasm. Functionally, catalyzes the GTP-dependent ribosomal translocation step during translation elongation. During this step, the ribosome changes from the pre-translocational (PRE) to the post-translocational (POST) state as the newly formed A-site-bound peptidyl-tRNA and P-site-bound deacylated tRNA move to the P and E sites, respectively. Catalyzes the coordinated movement of the two tRNA molecules, the mRNA and conformational changes in the ribosome. The protein is Elongation factor G of Stutzerimonas stutzeri (strain A1501) (Pseudomonas stutzeri).